The sequence spans 59 residues: Metallothionein-1B (59 aa).

Residues 1–29 (MPGPCCNDKCVCQEGGCKAGCQCTSCRCS) form a beta region. The a divalent metal cation site is built by Cys-5, Cys-6, Cys-10, Cys-17, Cys-21, Cys-23, Cys-26, Cys-28, Cys-31, Cys-34, Cys-38, Cys-40, Cys-46, Cys-50, Cys-54, Cys-56, and Cys-57. Residues 30–59 (PCQKCTSGCKCATKEECSKTCTKPCSCCPK) form an alpha region.

This sequence belongs to the metallothionein superfamily. Type 3 family.

Functionally, binds six divalent metal ions. Known to bind copper and cadmium. This chain is Metallothionein-1B, found in Callinectes sapidus (Blue crab).